The sequence spans 343 residues: Leucine-rich repeat-containing protein 39 (343 aa).

LRR repeat units lie at residues 64–87 (EEGRVILRIEKEEWKTLPPALVQL), 88–110 (SQIQEWQLHRIGLQRIPRFISSF), 111–133 (QSLIVLDLSRNSVTEIPKEIGKL), 134–156 (TRLRELLLSYNRVSYVPEELGCC), 158–180 (NLEKLELAMNRDLDELPTQLSNL), 181–203 (KKLSHLDLSMNQFTTIPDCVVNL), 204–226 (PSLEWLDMGSNILETLPDNIHRM), 228–249 (KLHTLWLPRNELEYLPDNISRM), 250–274 (KSLDTLVLSKNKLRDIPPLMEGMSN), and 275–295 (LRFVNFRDNPLTYDVTLPDLN).

It localises to the cytoplasm. Its subcellular location is the myofibril. The protein localises to the sarcomere. The protein resides in the m line. In terms of biological role, component of the sarcomeric M-band which plays a role in myocyte response to biomechanical stress. May regulate expression of other M-band proteins via an SRF-dependent pathway. Important for normal contractile function in heart. This Danio rerio (Zebrafish) protein is Leucine-rich repeat-containing protein 39.